The sequence spans 349 residues: Twinfilin-2 (349 aa).

A2 is modified (N-acetylalanine). ADF-H domains lie at 4–139 and 177–313; these read QTGI…KHLS and GLAF…DEVH. K14 carries the post-translational modification N6-acetyllysine. Y309 bears the Phosphotyrosine mark. The tract at residues 322 to 349 is disordered; it reads AFAKPKGPGGKRGHKRLIRGPGENGDDS. The span at 330–339 shows a compositional bias: basic residues; it reads GGKRGHKRLI. The residue at position 349 (S349) is a Phosphoserine.

It belongs to the actin-binding proteins ADF family. Twinfilin subfamily. In terms of assembly, interacts with G-actin; ADP-actin form and capping protein (CP). May also be able to interact with TWF1 and phosphoinositides, PI(4,5)P2. When bound to PI(4,5)P2, it is down-regulated. Interacts with MYO7A. In terms of processing, in vitro, phosphorylated by PRKCZ, CK2 and SRC. In terms of tissue distribution, ubiquitously expressed (at protein level).

The protein localises to the cytoplasm. It is found in the cytoskeleton. The protein resides in the perinuclear region. Its subcellular location is the cell projection. It localises to the stereocilium. Actin-binding protein involved in motile and morphological processes. Inhibits actin polymerization, likely by sequestering G-actin. By capping the barbed ends of filaments, it also regulates motility. Seems to play an important role in clathrin-mediated endocytosis and distribution of endocytic organelles. May play a role in regulating the mature length of the middle and short rows of stereocilia. This Homo sapiens (Human) protein is Twinfilin-2 (TWF2).